Here is a 492-residue protein sequence, read N- to C-terminus: GMP reductase (492 aa).

NADP(+) contacts are provided by residues 30–31 (SR) and arginine 78. 2 consecutive CBS domains span residues 99–162 (LIED…LVET) and 164–223 (MTPV…LNAT). Residues 260–262 (DIA) and 313–314 (VG) contribute to the NADP(+) site. The K(+) site is built by glycine 314, glycine 316, and cysteine 319. The Thioimidate intermediate role is filled by cysteine 319. Threonine 321 serves as the catalytic Proton donor/acceptor. Arginine 322 is a binding site for K(+). GMP is bound by residues 352-354 (DGG), 375-376 (GN), and 401-403 (GMA). NADP(+) contacts are provided by residues methionine 402 and 454–457 (SGIS). Residues 490–492 (SKL) carry the Microbody targeting signal motif.

It belongs to the IMPDH/GMPR family. GuaC type 1 subfamily. Homotetramer.

The protein localises to the glycosome. The catalysed reaction is IMP + NH4(+) + NADP(+) = GMP + NADPH + 2 H(+). Activated by GTP and inhibited by ATP and IMP. Mycophenolic acid (MPA) is a competitive inhibitor of the enzyme with respect to NADPH. Its function is as follows. Catalyzes the irreversible NADPH-dependent deamination of GMP to IMP. It functions in the conversion of nucleobase, nucleoside and nucleotide derivatives of G to A nucleotides, and in maintaining the intracellular balance of A and G nucleotides. The chain is GMP reductase from Leishmania major.